We begin with the raw amino-acid sequence, 533 residues long: 2-isopropylmalate synthase (533 aa).

The 262-residue stretch at 8–269 folds into the Pyruvate carboxyltransferase domain; sequence IIIFDTTLRD…YYNPFLGRPA (262 aa). Residues D17, H208, H210, and N244 each contribute to the Mn(2+) site. The segment at 408 to 533 is regulatory domain; that stretch reads RLELVQVSCG…VSANPAKASL (126 aa).

The protein belongs to the alpha-IPM synthase/homocitrate synthase family. LeuA type 1 subfamily. As to quaternary structure, homodimer. Requires Mn(2+) as cofactor.

The protein resides in the cytoplasm. The enzyme catalyses 3-methyl-2-oxobutanoate + acetyl-CoA + H2O = (2S)-2-isopropylmalate + CoA + H(+). It participates in amino-acid biosynthesis; L-leucine biosynthesis; L-leucine from 3-methyl-2-oxobutanoate: step 1/4. Catalyzes the condensation of the acetyl group of acetyl-CoA with 3-methyl-2-oxobutanoate (2-ketoisovalerate) to form 3-carboxy-3-hydroxy-4-methylpentanoate (2-isopropylmalate). The protein is 2-isopropylmalate synthase of Picosynechococcus sp. (strain ATCC 27264 / PCC 7002 / PR-6) (Agmenellum quadruplicatum).